The primary structure comprises 360 residues: S-adenosylmethionine:tRNA ribosyltransferase-isomerase (360 aa).

The protein belongs to the QueA family. As to quaternary structure, monomer.

The protein localises to the cytoplasm. It catalyses the reaction 7-aminomethyl-7-carbaguanosine(34) in tRNA + S-adenosyl-L-methionine = epoxyqueuosine(34) in tRNA + adenine + L-methionine + 2 H(+). Its pathway is tRNA modification; tRNA-queuosine biosynthesis. In terms of biological role, transfers and isomerizes the ribose moiety from AdoMet to the 7-aminomethyl group of 7-deazaguanine (preQ1-tRNA) to give epoxyqueuosine (oQ-tRNA). This is S-adenosylmethionine:tRNA ribosyltransferase-isomerase from Rhodopseudomonas palustris (strain ATCC BAA-98 / CGA009).